Here is a 202-residue protein sequence, read N- to C-terminus: Glycerol-3-phosphate acyltransferase (202 aa).

A run of 5 helical transmembrane segments spans residues Leu-6–Val-26, Ser-56–Phe-76, Ser-82–Phe-102, Ala-118–Ile-138, and Tyr-141–Asp-161.

The protein belongs to the PlsY family. As to quaternary structure, probably interacts with PlsX.

It is found in the cell inner membrane. The enzyme catalyses an acyl phosphate + sn-glycerol 3-phosphate = a 1-acyl-sn-glycero-3-phosphate + phosphate. It participates in lipid metabolism; phospholipid metabolism. Functionally, catalyzes the transfer of an acyl group from acyl-phosphate (acyl-PO(4)) to glycerol-3-phosphate (G3P) to form lysophosphatidic acid (LPA). This enzyme utilizes acyl-phosphate as fatty acyl donor, but not acyl-CoA or acyl-ACP. This Shewanella woodyi (strain ATCC 51908 / MS32) protein is Glycerol-3-phosphate acyltransferase.